A 425-amino-acid polypeptide reads, in one-letter code: Formyl-CoA:oxalate CoA-transferase (425 aa).

Residues 17 to 18 (QS), Arg38, 72 to 75 (LDTK), 96 to 98 (NFG), Arg104, and 136 to 139 (KVYE) each bind CoA. Asp168 (nucleophile) is an active-site residue. 247-249 (GGQ) contacts substrate.

This sequence belongs to the CoA-transferase III family. Frc subfamily. In terms of assembly, homodimer.

It carries out the reaction formyl-CoA + oxalate = oxalyl-CoA + formate. It participates in metabolic intermediate degradation; oxalate degradation; CO(2) and formate from oxalate: step 1/2. Its function is as follows. Involved in the catabolism of oxalate and in the adapatation to low pH via the induction of the oxalate-dependent acid tolerance response (ATR). Catalyzes the transfer of the CoA moiety from formyl-CoA to oxalate. The polypeptide is Formyl-CoA:oxalate CoA-transferase (Rhodopseudomonas palustris (strain BisA53)).